We begin with the raw amino-acid sequence, 507 residues long: Branchpoint-bridging protein (507 aa).

Over residues 84 to 93 (DLNPPTSRYR) the composition is skewed to polar residues. The tract at residues 84 to 110 (DLNPPTSRYRSLSPPPVYDSQGKRTNT) is disordered. The KH domain occupies 154–220 (YIPINDYPEI…NMNEPLHCVI (67 aa)). CCHC-type zinc fingers lie at residues 272–289 (RPCP…ECSS) and 297–314 (VICQ…DCTS). Residues 307–507 (HAARDCTSPL…PPPPPPPPSS (201 aa)) are disordered. Residues 319–336 (FGKRTSDGPEFRETKKLQ) show a composition bias toward basic and acidic residues. Over residues 345–376 (PVGSHPSAPGSGSANSGVAPASLHPPGTMAPP) the composition is skewed to low complexity. Pro residues-rich tracts occupy residues 390-412 (TLPP…PVAL) and 440-449 (EGPPAPPQTA). The span at 450–469 (PPLRQTAATASSAGSSQSAQ) shows a compositional bias: low complexity. Residues 484-507 (PGPPAAVLPPPPPPPPPPPPPPSS) are compositionally biased toward pro residues.

It belongs to the BBP/SF1 family.

It is found in the nucleus. In terms of biological role, necessary for the splicing of pre-mRNA. Has a role in the recognition of the branch site (5'-UACUAAC-3'), the pyrimidine tract and the 3'-splice site at the 3'-end of introns. This is Branchpoint-bridging protein (BBP) from Eremothecium gossypii (strain ATCC 10895 / CBS 109.51 / FGSC 9923 / NRRL Y-1056) (Yeast).